The chain runs to 2971 residues: MQRWIFCNIVLHILIYLAEFSHEQESYSSNEKIRKDYSDDNNYEPTPSYEKRKKEYGKDESYIKNYRGNNFSYDLSKNSSIFLHMGNGSNSKTLKRCNKKKNIKTNFLRPIEEEKTVLNNYVYKGVNFLDTIKRNDSSYKFDVYKDTSFLKNREYKELITMQYDYAYLEATKEVLYLIPKDKDYHKFYKNELEKILFNLKDSLKLLREGYIQSKLEMIRIHSDIDILNEFHQGNIINDNYFNNEIKKKKEDMEKYIREYNLYIYKYENQLKIKIQKLTNEVSINLNKSTCEKNCYNYILKLEKYKNIIKDKINKWKDLPEIYIDDKSFSYTFLKDVINNKIDIYKTISSFISTQKQLYYFEYIYIMNKNTLNLLSYNIQKTDINSSSKYTYTKSHFLKDNHILLSKYYTAKFIDILNKTYYYNLYKNKILLFNKYIIKLRNDLKEYAFKSIQFIQDKIKKHKDELSIENILQEVNNIYIKYDTSINEISKYNNLIINTDLQIVQQKLLEIKQKKNDITHKVQLINHIYKNIHDEILNKKNNEITKIIINNIKDHKKDLQDLLLFIQQIKQYNILTDHKITQCNNYYKEIIKMKEDINHIHIYIQPILNNLHTLKQVQNNKIKYEEHIKQILQKIYDKKESLKKIILLKDEAQLDITLLDDLIQKQTKKQTQTQTQTQKQTLIQNNETIQLISGQEDKHESNPFNHIQTYIQQKDTQNKNIQNLLKSLYNGNINTFIDTISKYILKQKDIELTQHVYTDEKINDYLEEIKNEQNKIDKTIDDIKIQETLKQITHIVNNIKTIKKDLLKEFIQHLIKYMNERYQNMQQGYNNLTNYINQYEEENNNMKQYITTIRNIQKIYYDNIYAKEKEIRSGQYYKDFITSRKNIYNIRENISKNVDMIKNEEKKKIQNCVDKYNSIKQYVKMLKNGDTQDENNNNNNDIYDKLIVPLDSIKQNIDKYNTEHNFITFTNKINTHNKKNQEMMEEFIYAYKRLKILKILNISLKACEKNNKSINTLNDKTQELKKIVTHEIDLLQKDILTSQISNKNVLLLNDLLKEIEQYIIDVHKLKKKSNDLFTYYEQSKNYFYFKNKKDNFDIQKTINKMNEWLAIKNYINEINKNYQTLYEKKINVLLHNSKSYVQYFYDHIINLILQKKNYLENTLKTKIQDNEHSLYALQQNEEYQKVKNEKDQNEIKKIKQLIEKNKNDILTYENNIEQIEQKNIELKTNAQNKDDQIVNTLNEVKKKIIYTYEKVDNQISNVLKNYEEGKVEYDKNVVQNVNDADDTNDIDEINDIDEINDIDEINDIDEINDIDEIKDIDHIKHFDDTKHFDDIYHADDTRDEYHIALSNYIKTELRNINLQEIKNNIIKIFKEFKSAHKEIKKESEQINKEFTKMDVVINQLRDIDRQMLDLYKELDEKYSEFNKTKIEEINNIRENINNVEIWYEKNIIEYFLRHMNDQKDKAAKYMENIDTYKNNIEIISKQINPENYVETLNKSNMYSYVEKANDLFYKQINNIIINSNQLKNEAFTIDELQNIQKNRKNLLTKKQQIIQYTNEIENIFNEIKNINNILVLTNYKSILQDISQNINHVSIYTEQLHNLYIKLEEEKEQMKTLYHKSNVLHNQINFNEDAFINNLLINIEKIKNDITHIKEKTNIYMIDVNKSKNNAQLYFHNTLRGNEKIEYLKNLKNSTNQQITLQELKQVQENVEKVKDIYNQTIKYEEEIKKNYHIITDYENKINDILHNSFIKQINMESSNNKKQTKQIIDIINDKTFEEHIKTSKTKINMLKEQSQMKHIDKTLLNEQALKLFVDINSTNNNLDNMLSEINSIQNNIHTYIQEANKSFDKFKIICDQNVNDLLNKLSLGDLNYMNHLKNLQNEIRNMNLEKNFMLDKSKKIDEEEKKLDILKVNISNINNSLDKLKKYYEEALFQKVKEKAEIQKENIEKIKQEINTLSDVFKKPFFFIQLNTDSSQHEKDINNNVETYKNNIDEIYNVFIQSYNLIQKYSSEIFSSTLNYIQTKEIKEKSIKEQNQLNQNEKEASVLLKNIKINETIKLFKQIKNERQNDVHNIKEDYNLLQQYLNYMKNEMEQLKKYKNDVHMDKNYVENNNGEKEKLLKETISSYYDKINNINNKLYIYKNKEDTYFNNMIKVSEILNIIIKKKQQNEQRIVINAEYDSSLINKDEEIKKEINNQIIELNKHNENISNIFKDIQNIKKQSQDIITNMNDMYKSTILLVDIIQKKEEALNKQKNILRNIDNILNKKENIIDKVIKCNCDDYKDILIQNETEYQKLQNINHTYEEKKKSIDILKIKNIKQKNIQEYKNKLEQMNTIINQSIEQHVFINADILQNEKIKLEEIIKNLDILDEQIMTYHNSIDELYKLGIQCDNHLITTISVVVNKNTTKIMIHIKKQKEDIQKINNYIQTNYNIINEEALQFHRLYGHNLISEDDKNNLVHIIKEQKNIYTQKEIDISKIIKHVKKGLYSLNEHDMNHDTHMNIINEHINNNILQPYTQLINMIKDIDNVFIKIQNNKFEQIQKYIEIIKSLEQLNKNINTDNLNKLKDTQNKLINIETEMKHKQKQLINKMNDIEKDNITDQYMHDVQQNIFEPITLKMNEYNTLLNDNHNNNINNEHQFNHLNSLHTKIFSHNYNKEQQQEYITNIMQRIDVFINDLDTYQYEYYFYEWNQEYKQIDKNKINQHINNIKNNLIHVKKQFEHTLENIKNNENIFDNIQLKKKDIDDIIININNTKETYLKELNKKKMLQNKKKVDEKSEINNHHTLQHDNQNVEQKNKIKDHNLITKPNNNSSEESHQNEQMKEQNKNILEKQTRNIKPHHVHNHNHNHNQNQKDSTKLQEQDISTHKLHNTIHEQQSKDNHQGNREKKQKNGNHERMYFASGIVVSILFLSSLGFVINSKNNKQEYDKEQEKQQQNDFVCDNNKMDDKSTQKYGRNQEEVMEISFDNDYI.

Positions 1–20 (MQRWIFCNIVLHILIYLAEF) are cleaved as a signal peptide. Residues 21–2897 (SHEQESYSSN…KKQKNGNHER (2877 aa)) are Extracellular-facing. Positions 30–50 (NEKIRKDYSDDNNYEPTPSYE) are disordered. N-linked (GlcNAc...) asparagine glycans are attached at residues Asn70, Asn78, Asn87, Asn135, Asn286, Asn384, and Asn417. The segment at 500-833 (LQIVQQKLLE…MQQGYNNLTN (334 aa)) is erythrocyte binding domain (EBD). LRR repeat units lie at residues 528-553 (YKNI…NIKD) and 607-633 (LNNL…ILQK). An N-linked (GlcNAc...) asparagine glycan is attached at Asn685. LRR repeat units follow at residues 736–758 (IDTI…VYTD) and 785–808 (QETL…LLKE). N-linked (GlcNAc...) asparagine glycosylation is found at Asn830, Asn892, Asn1000, and Asn1010. LRR repeat units lie at residues 993–1018 (LKIL…TLND) and 1356–1381 (LRNI…AHKE). Asn1425 carries N-linked (GlcNAc...) asparagine glycosylation. One copy of the LRR 7 repeat lies at 1466 to 1489 (AKYMENIDTYKNNIEIISKQINPE). Asn1496 carries an N-linked (GlcNAc...) asparagine glycan. LRR repeat units follow at residues 1512–1537 (YKQI…ELQN), 1586–1609 (SQNI…LEEE), and 1611–1636 (EQMK…AFIN). 5 N-linked (GlcNAc...) asparagine glycosylation sites follow: Asn1664, Asn1692, Asn1718, Asn1816, and Asn1844. 2 LRR repeats span residues 1700-1723 (LQEL…TIKY) and 1809-1834 (LKLF…SIQN). One copy of the LRR 13 repeat lies at 1880–1903 (QNEIRNMNLEKNFMLDKSKKIDEE). N-linked (GlcNAc...) asparagine glycosylation is found at Asn1913 and Asn1918. The stretch at 1944 to 1967 (KENIEKIKQEINTLSDVFKKPFFF) is one LRR 14 repeat. Residues Asn2054, Asn2207, Asn2289, Asn2300, Asn2338, and Asn2405 are each glycosylated (N-linked (GlcNAc...) asparagine). The stretch at 2523-2548 (IKDIDNVFIKIQNNKFEQIQKYIEII) is one LRR 15 repeat. N-linked (GlcNAc...) asparagine glycans are attached at residues Asn2598 and Asn2752. An LRR 16 repeat occupies 2731 to 2754 (ENIFDNIQLKKKDIDDIIININNT). Basic and acidic residues-rich tracts occupy residues 2773–2782 (KVDEKSEINN) and 2795–2804 (QKNKIKDHNL). Disordered stretches follow at residues 2773 to 2825 (KVDE…MKEQ) and 2840 to 2862 (HHVH…LQEQ). A glycan (N-linked (GlcNAc...) asparagine) is linked at Asn2811. Residues 2814–2825 (EESHQNEQMKEQ) are compositionally biased toward basic and acidic residues. Residues 2898–2918 (MYFASGIVVSILFLSSLGFVI) form a helical membrane-spanning segment. The Cytoplasmic segment spans residues 2919 to 2971 (NSKNNKQEYDKEQEKQQQNDFVCDNNKMDDKSTQKYGRNQEEVMEISFDNDYI).

In terms of assembly, may in part interact with AMA1 in the moving tight junction between the parasite and the erythrocyte membranes; the interaction may facilitate junction formation and active invasion. In terms of processing, proteolytically processed into multiple fragments following schizont rupture. In the mature schizont stage prior to merozoite release, full length RH1 is processed post-Golgi into a 240 kDa N-terminal form and a 120 kDa C-terminal form containing the transmembrane region. Both forms appear not to form a complex. However, they appear to remain in close proximity in late schizonts. Following merozoite invasion of host erythrocytes, the 240 kDa form is further processed into a 140 kDa form which may be involved in the disengagement of the ligand-receptor complex required during the invasion process. Also, the 120 kDa is further cleaved into a 110 kDa form and a transmembrane 9 kDa form probably by ROM4.

It localises to the cell membrane. The protein localises to the secreted. Its subcellular location is the cell junction. It is found in the tight junction. The protein resides in the cytoplasmic vesicle. It localises to the secretory vesicle. The protein localises to the rhoptry. In terms of biological role, during the asexual blood stage, binds to a sialic acid containing receptor on the surface of the host erythrocyte and thus is involved in merozoite invasion. Binds erythrocytes via a neuraminidase sensitive and trypsin-, chymotrypsin-resistant receptor. After merozoite attachment and reorientation, RH1 binding to its erythrocyte receptor triggers an increase in intracellular Ca(2+) within the parasite resulting in the release of microneme proteins such as EBA175 which in turn leads to the formation of the tight junction between parasite and host cell. The polypeptide is Reticulocyte-binding protein homolog 1 (Plasmodium falciparum (isolate 3D7)).